The primary structure comprises 356 residues: Cell division control protein 10 (356 aa).

Positions 36 to 286 constitute a Septin-type G domain; the sequence is KGFELNVLVV…NNYRKKIFEI (251 aa). A G1 motif region spans residues 46-53; the sequence is GRRGLGTS. Residues 46–53 and Thr70 contribute to the GTP site; that span reads GRRGLGTS. The interval 93-96 is G3 motif; that stretch reads TYHE. The tract at residues 163 to 166 is G4 motif; that stretch reads PKAD. Residues 164-172 and Arg235 contribute to the GTP site; that span reads KADMYTPDE.

It belongs to the TRAFAC class TrmE-Era-EngA-EngB-Septin-like GTPase superfamily. Septin GTPase family. Component of the septin complex.

Functionally, septins are GTPases involved in cytokinesis. The septins localize to the site of cleavage and act as a structural scaffold that recruits different components involved in diverse processes at specific stages during the cell cycle. Septins are also involved in cell morphogenesis, chitin deposition, cell cycle regulation, cell compartmentalization and spore wall formation. The chain is Cell division control protein 10 (CDC10) from Encephalitozoon cuniculi (strain GB-M1) (Microsporidian parasite).